Here is a 241-residue protein sequence, read N- to C-terminus: MRIDILTLFPEMFAPLEHSIVGKARDKGLLEINYHNFRENAEKARHVDDEPYGGGQGMLLLAQPIFDTMDSIEQTKPRVILLDPAGRTFNQAYAEELAQEEQLIFICGHYEGYDERIKTLVTDEISLGDYVLTGGELAAMTMIDATVRLIPEVIGKEVSHTDDSFSSGLLEYPQYTRPYEYRGMVVPDVLMSGHHENIRKWRLEESLRKTYQRRPDLLENYNFTAEELTIFEKIKAEDTVD.

S-adenosyl-L-methionine is bound by residues Gly108 and 127-132; that span reads LGDYVL.

This sequence belongs to the RNA methyltransferase TrmD family. In terms of assembly, homodimer.

The protein localises to the cytoplasm. The enzyme catalyses guanosine(37) in tRNA + S-adenosyl-L-methionine = N(1)-methylguanosine(37) in tRNA + S-adenosyl-L-homocysteine + H(+). Its function is as follows. Specifically methylates guanosine-37 in various tRNAs. The sequence is that of tRNA (guanine-N(1)-)-methyltransferase from Streptococcus suis (strain 98HAH33).